The primary structure comprises 300 residues: Dioxygenase FUM3 (300 aa).

Histidine 146, aspartate 148, and histidine 222 together coordinate Fe cation.

Belongs to the PhyH family. As to quaternary structure, homodimer. Fe cation serves as cofactor.

Its pathway is mycotoxin biosynthesis. Its function is as follows. Dioxygenase; part of the gene cluster that mediates the biosynthesis of fumonisins B1 (FB1), B2 (FB2), B3 (FB3), and B4 (FB4), which are carcinogenic mycotoxins. Within the pathway, FUM3 performs the C-5 hydroxylation present in FB1 and FB2 and which occurs late in the biosynthesis. The biosynthesis starts with the FUM1-catalyzed carbon chain assembly from one molecule of acetyl-CoA, eight molecules of malonyl-CoA, and two molecules of methionine (in S-adenosyl form). The C18 polyketide chain is released from the enzyme by a nucleophilic attack of a carbanion, which is derived from R-carbon of alanine by decarboxylation, on the carbonyl carbon of polyketide acyl chain. This step is catalyzed by the pyridoxal 5'-phosphate-dependent aminoacyl transferase FUM8. The resultant 3-keto intermediate is then stereospecifically reduced to a 3-hydroxyl product by reductase FUM13. Subsequent oxidations at C-10 by the cytochrome P450 monooxygenase FUM2, C-14 and C-15 by FUM6, FUM12 or FUM15, tricarballylic esterification of the hydroxyl groups on C-14 and C-15 by acyltransferase FUM14, and C-5 hydroxylation by 2-keto-glutarate-dependent dioxygenase FUM3 furnish the biosynthesis of fumonisins. The tricarballylic moieties are most likely derived from the citric acid cycle, and their addition to the carbon backbone may involve FUM7, FUM10, FUM11 and FUM14. This Gibberella moniliformis (strain M3125 / FGSC 7600) (Maize ear and stalk rot fungus) protein is Dioxygenase FUM3.